Reading from the N-terminus, the 221-residue chain is ATP-dependent dethiobiotin synthetase BioD (221 aa).

11 to 16 (DIGKTL) contacts ATP. Threonine 15 contacts Mg(2+). Lysine 35 is a catalytic residue. Threonine 39 is a substrate binding site. Residues aspartate 44 and 103–106 (EGAG) contribute to the ATP site. Residues aspartate 44 and glutamate 103 each coordinate Mg(2+).

Belongs to the dethiobiotin synthetase family. In terms of assembly, homodimer. Mg(2+) is required as a cofactor.

It is found in the cytoplasm. The enzyme catalyses (7R,8S)-7,8-diammoniononanoate + CO2 + ATP = (4R,5S)-dethiobiotin + ADP + phosphate + 3 H(+). It participates in cofactor biosynthesis; biotin biosynthesis; biotin from 7,8-diaminononanoate: step 1/2. Functionally, catalyzes a mechanistically unusual reaction, the ATP-dependent insertion of CO2 between the N7 and N8 nitrogen atoms of 7,8-diaminopelargonic acid (DAPA, also called 7,8-diammoniononanoate) to form a ureido ring. This Leptospira borgpetersenii serovar Hardjo-bovis (strain L550) protein is ATP-dependent dethiobiotin synthetase BioD.